The sequence spans 124 residues: Small ribosomal subunit protein uS12 (124 aa).

A 3-methylthioaspartic acid modification is found at Asp-89. A disordered region spans residues 103–124 (DTAGVQKRRQGRSKYGAKRPKS). A compositionally biased stretch (basic residues) spans 108 to 124 (QKRRQGRSKYGAKRPKS).

It belongs to the universal ribosomal protein uS12 family. Part of the 30S ribosomal subunit. Contacts proteins S8 and S17. May interact with IF1 in the 30S initiation complex.

Its function is as follows. With S4 and S5 plays an important role in translational accuracy. Interacts with and stabilizes bases of the 16S rRNA that are involved in tRNA selection in the A site and with the mRNA backbone. Located at the interface of the 30S and 50S subunits, it traverses the body of the 30S subunit contacting proteins on the other side and probably holding the rRNA structure together. The combined cluster of proteins S8, S12 and S17 appears to hold together the shoulder and platform of the 30S subunit. The protein is Small ribosomal subunit protein uS12 of Methylococcus capsulatus (strain ATCC 33009 / NCIMB 11132 / Bath).